A 579-amino-acid chain; its full sequence is MFS-type transporter ppz2 (579 aa).

The disordered stretch occupies residues 1 to 23 (MQTATALEDSANAPSPAASSQGQ). The segment covering 10–20 (SANAPSPAASS) has biased composition (low complexity). A glycan (N-linked (GlcNAc...) asparagine) is linked at asparagine 38. Transmembrane regions (helical) follow at residues 48 to 68 (ALIM…NTII), 83 to 103 (AAYT…TMVW), 121 to 141 (LCFF…MLIA), 145 to 165 (IQGI…GDLF), 171 to 191 (GLYY…GPVV), 203 to 223 (WCFY…ILLL), 236 to 256 (IAAI…MILL), 269 to 289 (SATV…CFSW), 298 to 318 (LLPV…ACFI), 336 to 356 (AVLG…AVSI), 374 to 394 (LTPI…FIDL), 403 to 423 (IIVF…APMV), 438 to 460 (TSAY…QTVF), and 516 to 536 (SMWI…PFLG).

It belongs to the major facilitator superfamily. TCR/Tet family.

It localises to the membrane. In terms of biological role, MFS-type transporter; part of the gene cluster that mediates the biosynthesis of pyrrolopyrazines, secondary metabolites showing insecticidal activity. Probably involved in the secretion of peramine and other pyrrolopyrazines. The polypeptide is MFS-type transporter ppz2 (Metarhizium majus (strain ARSEF 297)).